The chain runs to 128 residues: Large ribosomal subunit protein uL22 (128 aa).

The protein belongs to the universal ribosomal protein uL22 family. Part of the 50S ribosomal subunit.

This protein binds specifically to 23S rRNA; its binding is stimulated by other ribosomal proteins, e.g. L4, L17, and L20. It is important during the early stages of 50S assembly. It makes multiple contacts with different domains of the 23S rRNA in the assembled 50S subunit and ribosome. Its function is as follows. The globular domain of the protein is located near the polypeptide exit tunnel on the outside of the subunit, while an extended beta-hairpin is found that lines the wall of the exit tunnel in the center of the 70S ribosome. In Methylocella silvestris (strain DSM 15510 / CIP 108128 / LMG 27833 / NCIMB 13906 / BL2), this protein is Large ribosomal subunit protein uL22.